A 906-amino-acid polypeptide reads, in one-letter code: Protein translocase subunit SecA (906 aa).

Residues Gln86, 104-108 (GEGKT), and Asp511 each bind ATP. Basic and acidic residues-rich tracts occupy residues 853–865 (HESV…RHDE) and 877–888 (VRREGPKVKRND). A disordered region spans residues 853-906 (HESVIDNNQRHDEDEQEEAPKVQQVRREGPKVKRNDPCPCGSGKKYKQCHSKVE). 4 residues coordinate Zn(2+): Cys890, Cys892, Cys901, and His902. The span at 896 to 906 (KKYKQCHSKVE) shows a compositional bias: basic residues.

The protein belongs to the SecA family. Monomer and homodimer. Part of the essential Sec protein translocation apparatus which comprises SecA, SecYEG and auxiliary proteins SecDF-YajC and YidC. Zn(2+) is required as a cofactor.

The protein resides in the cell inner membrane. It is found in the cytoplasm. The enzyme catalyses ATP + H2O + cellular proteinSide 1 = ADP + phosphate + cellular proteinSide 2.. Its function is as follows. Part of the Sec protein translocase complex. Interacts with the SecYEG preprotein conducting channel. Has a central role in coupling the hydrolysis of ATP to the transfer of proteins into and across the cell membrane, serving both as a receptor for the preprotein-SecB complex and as an ATP-driven molecular motor driving the stepwise translocation of polypeptide chains across the membrane. The sequence is that of Protein translocase subunit SecA from Francisella tularensis subsp. tularensis (strain WY96-3418).